The primary structure comprises 441 residues: Cysteine--tRNA ligase (441 aa).

A Zn(2+)-binding site is contributed by C24. The short motif at 26 to 36 is the 'HIGH' region element; sequence PTVYNYIHIGN. Zn(2+) is bound by residues C204, H230, and E234. Positions 262 to 266 match the 'KMSKS' region motif; sequence KMSKS. K265 contacts ATP.

The protein belongs to the class-I aminoacyl-tRNA synthetase family. Monomer. Zn(2+) is required as a cofactor.

The protein resides in the cytoplasm. It catalyses the reaction tRNA(Cys) + L-cysteine + ATP = L-cysteinyl-tRNA(Cys) + AMP + diphosphate. The polypeptide is Cysteine--tRNA ligase (Mycoplasma capricolum subsp. capricolum (strain California kid / ATCC 27343 / NCTC 10154)).